Reading from the N-terminus, the 75-residue chain is MIYKVLYQKDQIVNPRRETTKTLFLEADNVVAARTMVEDNTPYNIELIQELTGNSLAYEKQNPDFKLTTFKSEDK.

Belongs to the RNA polymerase subunit epsilon family. As to quaternary structure, RNAP is composed of a core of 2 alpha, a beta and a beta' subunit. The core is associated with a delta subunit, and at least one of epsilon or omega. When a sigma factor is associated with the core the holoenzyme is formed, which can initiate transcription.

It carries out the reaction RNA(n) + a ribonucleoside 5'-triphosphate = RNA(n+1) + diphosphate. Functionally, a non-essential component of RNA polymerase (RNAP). The sequence is that of DNA-directed RNA polymerase subunit epsilon from Lactobacillus gasseri (strain ATCC 33323 / DSM 20243 / BCRC 14619 / CIP 102991 / JCM 1131 / KCTC 3163 / NCIMB 11718 / NCTC 13722 / AM63).